A 257-amino-acid chain; its full sequence is tRNA uridine(34) hydroxylase (257 aa).

A Rhodanese domain is found at Asn128 to Tyr222. Cys182 functions as the Cysteine persulfide intermediate in the catalytic mechanism.

It belongs to the TrhO family.

The enzyme catalyses uridine(34) in tRNA + AH2 + O2 = 5-hydroxyuridine(34) in tRNA + A + H2O. Catalyzes oxygen-dependent 5-hydroxyuridine (ho5U) modification at position 34 in tRNAs. This chain is tRNA uridine(34) hydroxylase, found in Xylella fastidiosa (strain M23).